The sequence spans 567 residues: Urease subunit alpha (567 aa).

The 439-residue stretch at 129–567 (GGIDTHIHWI…LPMAQRYFLF (439 aa)) folds into the Urease domain. The Ni(2+) site is built by H134, H136, and K217. An N6-carboxylysine modification is found at K217. H219 is a binding site for substrate. Ni(2+) is bound by residues H246 and H272. H320 (proton donor) is an active-site residue. Residue D360 participates in Ni(2+) binding.

It belongs to the metallo-dependent hydrolases superfamily. Urease alpha subunit family. In terms of assembly, heterotrimer of UreA (gamma), UreB (beta) and UreC (alpha) subunits. Three heterotrimers associate to form the active enzyme. It depends on Ni cation as a cofactor. In terms of processing, carboxylation allows a single lysine to coordinate two nickel ions.

It is found in the cytoplasm. The catalysed reaction is urea + 2 H2O + H(+) = hydrogencarbonate + 2 NH4(+). It participates in nitrogen metabolism; urea degradation; CO(2) and NH(3) from urea (urease route): step 1/1. This chain is Urease subunit alpha, found in Klebsiella pneumoniae (strain 342).